We begin with the raw amino-acid sequence, 124 residues long: MDLLAIDLDFDVSESKLERNKRLKQKVSIETDGWTPRVQCFGHLSKNGVVLGEEAYILEQSKFAAEEQYYLGNYSLAKKFAFQALDVPTDSSSIEYHRLSSGEINEIEDIIRRCEMKLENKQSN.

This is an uncharacterized protein from Schizosaccharomyces pombe (strain 972 / ATCC 24843) (Fission yeast).